The chain runs to 603 residues: Elongation factor 4 (603 aa).

In terms of domain architecture, tr-type G spans 6–188 (AHIRNFCIIA…SVVQNVPPPS (183 aa)). GTP-binding positions include 18–23 (DHGKST) and 135–138 (NKID).

Belongs to the TRAFAC class translation factor GTPase superfamily. Classic translation factor GTPase family. LepA subfamily.

The protein resides in the cell inner membrane. It carries out the reaction GTP + H2O = GDP + phosphate + H(+). In terms of biological role, required for accurate and efficient protein synthesis under certain stress conditions. May act as a fidelity factor of the translation reaction, by catalyzing a one-codon backward translocation of tRNAs on improperly translocated ribosomes. Back-translocation proceeds from a post-translocation (POST) complex to a pre-translocation (PRE) complex, thus giving elongation factor G a second chance to translocate the tRNAs correctly. Binds to ribosomes in a GTP-dependent manner. This chain is Elongation factor 4, found in Myxococcus xanthus (strain DK1622).